The primary structure comprises 1032 residues: Serine/threonine-protein kinase ppk31 (1032 aa).

The PAS domain maps to 3 to 72; sequence NPEQLKRILS…KATDNLFRKS (70 aa). The Protein kinase domain maps to 528-877; it reads FILLKEINRG…YQEIKKHPFF (350 aa). ATP contacts are provided by residues 534-542 and lysine 557; that span reads INRGAYGRV. Residue aspartate 652 is the Proton acceptor of the active site. The tract at residues 938 to 963 is disordered; that stretch reads PKATPADSGTETSNSAAFSASEEETT. Positions 947 to 957 are enriched in low complexity; it reads TETSNSAAFSA.

It belongs to the protein kinase superfamily. Ser/Thr protein kinase family.

The protein resides in the cytoplasm. It carries out the reaction L-seryl-[protein] + ATP = O-phospho-L-seryl-[protein] + ADP + H(+). It catalyses the reaction L-threonyl-[protein] + ATP = O-phospho-L-threonyl-[protein] + ADP + H(+). Has a role in meiosis. The protein is Serine/threonine-protein kinase ppk31 (ppk31) of Schizosaccharomyces pombe (strain 972 / ATCC 24843) (Fission yeast).